A 597-amino-acid chain; its full sequence is CTP synthase (597 aa).

The amidoligase domain stretch occupies residues 1 to 272; sequence MARPKNVKYV…DMRVLKKLGL (272 aa). S18 serves as a coordination point for CTP. Position 18 (S18) interacts with UTP. Position 19 to 24 (19 to 24) interacts with ATP; it reads SLGKGI. L-glutamine is bound at residue Y59. Residue D76 participates in ATP binding. The Mg(2+) site is built by D76 and E146. Residues 153-155, 193-198, and K229 contribute to the CTP site; these read DIE and KTKPTQ. Residues 193 to 198 and K229 each bind UTP; that span reads KTKPTQ. The 245-residue stretch at 299 to 543 folds into the Glutamine amidotransferase type-1 domain; it reads NVAICGKYTE…VGAAKAYADG (245 aa). G363 is a binding site for L-glutamine. The active-site Nucleophile; for glutamine hydrolysis is the C390. L-glutamine is bound by residues 391 to 394, E414, and R471; that span reads LGMQ. Residues H516 and E518 contribute to the active site.

It belongs to the CTP synthase family. As to quaternary structure, homotetramer.

It carries out the reaction UTP + L-glutamine + ATP + H2O = CTP + L-glutamate + ADP + phosphate + 2 H(+). The catalysed reaction is L-glutamine + H2O = L-glutamate + NH4(+). It catalyses the reaction UTP + NH4(+) + ATP = CTP + ADP + phosphate + 2 H(+). It participates in pyrimidine metabolism; CTP biosynthesis via de novo pathway; CTP from UDP: step 2/2. Allosterically activated by GTP, when glutamine is the substrate; GTP has no effect on the reaction when ammonia is the substrate. The allosteric effector GTP functions by stabilizing the protein conformation that binds the tetrahedral intermediate(s) formed during glutamine hydrolysis. Inhibited by the product CTP, via allosteric rather than competitive inhibition. Its function is as follows. Catalyzes the ATP-dependent amination of UTP to CTP with either L-glutamine or ammonia as the source of nitrogen. Regulates intracellular CTP levels through interactions with the four ribonucleotide triphosphates. In Chlorobium luteolum (strain DSM 273 / BCRC 81028 / 2530) (Pelodictyon luteolum), this protein is CTP synthase.